Reading from the N-terminus, the 259-residue chain is Ribonuclease PH (259 aa).

Residues R88 and 126–128 (GTR) contribute to the phosphate site.

The protein belongs to the RNase PH family. In terms of assembly, homohexameric ring arranged as a trimer of dimers.

The enzyme catalyses tRNA(n+1) + phosphate = tRNA(n) + a ribonucleoside 5'-diphosphate. Phosphorolytic 3'-5' exoribonuclease that plays an important role in tRNA 3'-end maturation. Removes nucleotide residues following the 3'-CCA terminus of tRNAs; can also add nucleotides to the ends of RNA molecules by using nucleoside diphosphates as substrates, but this may not be physiologically important. Probably plays a role in initiation of 16S rRNA degradation (leading to ribosome degradation) during starvation. In Mycobacterium bovis (strain ATCC BAA-935 / AF2122/97), this protein is Ribonuclease PH.